A 194-amino-acid polypeptide reads, in one-letter code: UPF0301 protein CBU_2093 (194 aa).

This sequence belongs to the UPF0301 (AlgH) family.

The chain is UPF0301 protein CBU_2093 from Coxiella burnetii (strain RSA 493 / Nine Mile phase I).